Consider the following 1194-residue polypeptide: DNA polymerase catalytic subunit (1194 aa).

The protein belongs to the DNA polymerase type-B family. As to quaternary structure, forms a complex with the ssDNA-binding protein, the DNA polymerase processivity factor, and the alkaline exonuclease. Interacts with the helicase-primase complex composed of the primase, the helicase and the primase-associated factor; this interaction may coordinate leading and lagging strand DNA synthesis at the replication fork.

Its subcellular location is the host nucleus. It carries out the reaction DNA(n) + a 2'-deoxyribonucleoside 5'-triphosphate = DNA(n+1) + diphosphate. It catalyses the reaction Endonucleolytic cleavage to 5'-phosphomonoester.. Its function is as follows. Replicates viral genomic DNA. The replication complex is composed of six viral proteins: the DNA polymerase, processivity factor, primase, primase-associated factor, helicase, and ssDNA-binding protein. Additionally, the polymerase contains an intrinsic ribonuclease H (RNase H) activity that specifically degrades RNA/DNA heteroduplexes or duplex DNA substrates in the 5' to 3' direction. Therefore, it can catalyze the excision of the RNA primers that initiate the synthesis of Okazaki fragments at a replication fork during viral DNA replication. The sequence is that of DNA polymerase catalytic subunit from Varicella-zoster virus (strain Oka vaccine) (HHV-3).